Here is a 280-residue protein sequence, read N- to C-terminus: Diaminopimelate epimerase (280 aa).

Substrate-binding residues include Asn13 and Asn66. Catalysis depends on Cys75, which acts as the Proton donor. Substrate is bound by residues Gly76 to Asn77, Asn162, Asn195, and Glu213 to Arg214. The Proton acceptor role is filled by Cys222. Gly223–Thr224 is a binding site for substrate.

The protein belongs to the diaminopimelate epimerase family. Homodimer.

It is found in the cytoplasm. The enzyme catalyses (2S,6S)-2,6-diaminopimelate = meso-2,6-diaminopimelate. The protein operates within amino-acid biosynthesis; L-lysine biosynthesis via DAP pathway; DL-2,6-diaminopimelate from LL-2,6-diaminopimelate: step 1/1. Catalyzes the stereoinversion of LL-2,6-diaminopimelate (L,L-DAP) to meso-diaminopimelate (meso-DAP), a precursor of L-lysine and an essential component of the bacterial peptidoglycan. This is Diaminopimelate epimerase from Synechococcus elongatus (strain ATCC 33912 / PCC 7942 / FACHB-805) (Anacystis nidulans R2).